The primary structure comprises 608 residues: Probable adenylate kinase 5, chloroplastic (608 aa).

Over residues 1 to 20 the composition is skewed to low complexity; that stretch reads MAASSSSSSPAAASAPFAAP. The segment at 1-44 is disordered; that stretch reads MAASSSSSSPAAASAPFAAPGPHRRPGLALRPSPPTPPSSSLSC. A chloroplast-targeting transit peptide spans 1–75; the sequence is MAASSSSSSP…GPRGMGLRCR (75 aa). 99 to 104 is an ATP binding site; the sequence is ASGKGT. Residues 119–148 form an NMP region; the sequence is STGDLLRAEVSSGTEIGKKAKEYMDNGMLV. AMP is bound by residues Thr-120, Arg-125, 146-148, 175-178, and Gln-182; these read MLV and GYPR. Residues Arg-209, Arg-213, and 222–223 each bind ATP; that span reads IY. Positions 212–245 are LID; it reads GRRLDPETGKIYHIKNFPPENDEVSARLVTRSDD. AMP contacts are provided by Arg-242 and Arg-253.

The protein belongs to the adenylate kinase family.

Its subcellular location is the plastid. It is found in the chloroplast. It catalyses the reaction AMP + ATP = 2 ADP. Functionally, catalyzes the reversible transfer of the terminal phosphate group between ATP and AMP. Plays an important role in cellular energy homeostasis and in adenine nucleotide metabolism. The chain is Probable adenylate kinase 5, chloroplastic from Oryza sativa subsp. japonica (Rice).